Here is a 419-residue protein sequence, read N- to C-terminus: Glucose-1-phosphate adenylyltransferase (419 aa).

Residues Tyr-107, Gly-172, 187–188, and Ser-205 contribute to the alpha-D-glucose 1-phosphate site; that span reads EK.

It belongs to the bacterial/plant glucose-1-phosphate adenylyltransferase family. As to quaternary structure, homotetramer.

The catalysed reaction is alpha-D-glucose 1-phosphate + ATP + H(+) = ADP-alpha-D-glucose + diphosphate. Its pathway is glycan biosynthesis; glycogen biosynthesis. Functionally, involved in the biosynthesis of ADP-glucose, a building block required for the elongation reactions to produce glycogen. Catalyzes the reaction between ATP and alpha-D-glucose 1-phosphate (G1P) to produce pyrophosphate and ADP-Glc. This is Glucose-1-phosphate adenylyltransferase from Novosphingobium aromaticivorans (strain ATCC 700278 / DSM 12444 / CCUG 56034 / CIP 105152 / NBRC 16084 / F199).